Reading from the N-terminus, the 72-residue chain is SRY-related protein AES2 (72 aa).

The HMG box DNA-binding region spans V1–K69.

It localises to the nucleus. This chain is SRY-related protein AES2, found in Alligator mississippiensis (American alligator).